The following is an 882-amino-acid chain: MAGGAAHPGAELLPFARFLDSSLQPLVYGYGRGTLHELRAREFGRLAGTVYLDHAGTTLFPQSQITSFMKDLMENVYGNPHSQNISSKLTHDTVEQVRFRILAHFHTSPEDYTVIFTSGSTAALKLVAEAFPWVSPGPEGSGSCFCYLTDSHTSVVGMRKITAAMNVSSIPVRPEDMWSAERQDAAAAGDPAGQPPHLFCYPAQSNFSGTRYPLSWIGEVKSGRRRPASRPGKWFVLLDAAAFVGTSPLDLSVHQADFVPISFYKIFGFPTGLGALLVNNRLAALLRKTYFGGGTAAAYLAGDDFYVPRESVAERFEDGTISFLDVIALKHGFDALERLTGGMESIRQHTFTLAQYTYTALSSLRYPNGAPVVQIYSDSDFSSPEVQGPVISFNVLDDHGNVVGYSQVDKMASLHNIHVRTGCFCNTGACQRHLGISDEMVKKHLQAGHVCGDDVDLIDGQPTGSVRISFGYMSTLEDAQAFLRFIIATRLHSSHGQPLPLATPGEAGAPPEDSEAQNAVPAARARGSSSPQEDTSPHSGVWNNSPTAVDAEGLCPPLLEATGTQQTTSEKAADVPDGDLRSHVITNLFLYPIKSCAAFEVIRWPLGSQGLLYDRSWMVVNHNGICLSQKQEPRLCLIQPFIDLQRRIMVIKAQGMEPIEVPLEENSEQVQICQSKVCADRVNTYDCGEKISNWLSKFFGRPYHLIKQSSDFQRNAKKKHGKDQSAHTTATLSLVNEAQYLLINRSSILELQQQLSTSCENGKEELFPMNNLISRFRANIITNGTRAFEEEKWDEISIGSLRFQVLGPCHRCQMICIDQQTGQRNQDVFQKLSERRERKVKFGVYLMHTSLDLSSPCYLSVGSQVLPLLKENMEHHDIPATE.

K265 is subject to N6-(pyridoxal phosphate)lysine. C425 is an active-site residue. A disordered region spans residues 496-546; the sequence is GQPLPLATPGEAGAPPEDSEAQNAVPAARARGSSSPQEDTSPHSGVWNNSP. Residues 527-546 are compositionally biased toward polar residues; it reads GSSSPQEDTSPHSGVWNNSP. Residues S528 and S530 each carry the phosphoserine modification. Residues 707 to 868 form the MOSC domain; it reads KQSSDFQRNA…LSVGSQVLPL (162 aa).

It belongs to the class-V pyridoxal-phosphate-dependent aminotransferase family. MOCOS subfamily. Requires pyridoxal 5'-phosphate as cofactor. As to expression, ubiquitously expressed.

It catalyses the reaction Mo-molybdopterin + L-cysteine + AH2 = thio-Mo-molybdopterin + L-alanine + A + H2O. It functions in the pathway cofactor biosynthesis; molybdopterin biosynthesis. Its function is as follows. Sulfurates the molybdenum cofactor. Sulfation of molybdenum is essential for xanthine dehydrogenase (XDH) and aldehyde oxidase (ADO) enzymes in which molybdenum cofactor is liganded by 1 oxygen and 1 sulfur atom in active form. In Bos taurus (Bovine), this protein is Molybdenum cofactor sulfurase.